Here is a 156-residue protein sequence, read N- to C-terminus: Ribosomal RNA large subunit methyltransferase H (156 aa).

S-adenosyl-L-methionine-binding positions include Leu-73, Gly-104, and 123 to 128; that span reads ISSMTL.

Belongs to the RNA methyltransferase RlmH family. Homodimer.

Its subcellular location is the cytoplasm. The catalysed reaction is pseudouridine(1915) in 23S rRNA + S-adenosyl-L-methionine = N(3)-methylpseudouridine(1915) in 23S rRNA + S-adenosyl-L-homocysteine + H(+). Its function is as follows. Specifically methylates the pseudouridine at position 1915 (m3Psi1915) in 23S rRNA. This is Ribosomal RNA large subunit methyltransferase H from Burkholderia ambifaria (strain MC40-6).